Reading from the N-terminus, the 1311-residue chain is Kinase and exchange factor for Rac A (1311 aa).

Residues 18-316 (LVFKDIIGKG…STIVTILESI (299 aa)) form the Protein kinase domain. ATP is bound by residues 24–32 (IGKGNFGCV) and K45. D138 acts as the Proton acceptor in catalysis. 3 disordered regions span residues 169–201 (NGSD…KNNG), 360–426 (QQQS…TTTT), and 446–471 (PLSK…LIGS). The span at 451 to 471 (QQQQQRNQNSSIIDNNSLIGS) shows a compositional bias: low complexity. In terms of domain architecture, IQ spans 650 to 679 (ELNLIIKLQSRIRGWLVRRRYKIFLSNWKL). The 237-residue stretch at 691–927 (QWIRLFNQLI…RETSNYIQSQ (237 aa)) folds into the DH domain. Composition is skewed to low complexity over residues 994–1021 (SKYN…TNSN) and 1031–1044 (STSN…GNNN). Disordered stretches follow at residues 994-1044 (SKYN…GNNN), 1114-1145 (NNPN…NGSI), and 1208-1311 (GTST…FSKD). Residues 1117 to 1137 (NGGGSNNNSIGGGGGGRGGSG) are compositionally biased toward gly residues. The segment covering 1208 to 1229 (GTSTPERKTSLVNMSPSTTSSL) has biased composition (polar residues). Residues 1230-1245 (NNIDSNYNNNNNNVTN) are compositionally biased toward low complexity. Residues 1246–1257 (TPIKSVTSSPSI) show a composition bias toward polar residues. Residues 1263–1276 (NDNNQQPQLPSQPN) are compositionally biased toward low complexity. Positions 1277–1287 (EEFQFTVPTTP) are enriched in polar residues. A compositionally biased stretch (basic residues) spans 1290–1303 (KKKKRGSFSSKLKR).

Belongs to the protein kinase superfamily. TKL Ser/Thr protein kinase family. The cofactor is Mg(2+).

It catalyses the reaction L-seryl-[protein] + ATP = O-phospho-L-seryl-[protein] + ADP + H(+). It carries out the reaction L-threonyl-[protein] + ATP = O-phospho-L-threonyl-[protein] + ADP + H(+). This is Kinase and exchange factor for Rac A (kxcA) from Dictyostelium discoideum (Social amoeba).